The primary structure comprises 308 residues: Ribosomal RNA small subunit methyltransferase H (308 aa).

S-adenosyl-L-methionine is bound by residues 32 to 34 (AGH), Asp52, Phe79, Asp100, and Gln107.

Belongs to the methyltransferase superfamily. RsmH family.

The protein resides in the cytoplasm. It carries out the reaction cytidine(1402) in 16S rRNA + S-adenosyl-L-methionine = N(4)-methylcytidine(1402) in 16S rRNA + S-adenosyl-L-homocysteine + H(+). Functionally, specifically methylates the N4 position of cytidine in position 1402 (C1402) of 16S rRNA. The polypeptide is Ribosomal RNA small subunit methyltransferase H (Mycoplasma mycoides subsp. mycoides SC (strain CCUG 32753 / NCTC 10114 / PG1)).